The chain runs to 342 residues: C-X-C chemokine receptor type 6 (342 aa).

The Extracellular portion of the chain corresponds to 1-32 (MAEHDYHEDYGFNSFNDSSQEEHQDFLQFSKV). The N-linked (GlcNAc...) asparagine glycan is linked to N16. Residues 33–59 (FLPCMYLVVFVCGLVGNSLVLVISIFY) traverse the membrane as a helical segment. The Cytoplasmic segment spans residues 60-68 (HKLQSLTDV). A helical membrane pass occupies residues 69–89 (FLVNLPLADLVFVCTLPFWAY). The Extracellular portion of the chain corresponds to 90–103 (AGIHEWVFGQVMCK). C102 and C180 are oxidised to a cystine. Residues 104–125 (SLLGIYTINFYTSMLILTCITV) traverse the membrane as a helical segment. Residues 126–143 (DRFIVVVKATKAYNQQAK) are Cytoplasmic-facing. A helical membrane pass occupies residues 144-164 (RMTWGKVTSLLIWVISLLVSL). Residues 165–187 (PQIIYGNVFNLDKLICGYHDEAI) are Extracellular-facing. A helical membrane pass occupies residues 188-215 (STVVLATQMTLGFFLPLLTMIVCYSVII). Residues 216–231 (KTLLHAGGFQKHRSLK) are Cytoplasmic-facing. The helical transmembrane segment at 232-259 (IIFLVMAVFLLTQMPFNLMKLIRSTHWE) threads the bilayer. Residues 260 to 275 (YYAMTSFHYTIMVTEA) lie on the Extracellular side of the membrane. A helical membrane pass occupies residues 276–293 (IAYLRACLNPVLYAFVSL). The Cytoplasmic portion of the chain corresponds to 294-342 (KFRKNFWKLVKDIGCLPYLGVSHQWKSSEDNSKTFSASHNVEATSMFQL).

Belongs to the G-protein coupled receptor 1 family.

It localises to the cell membrane. Its function is as follows. Receptor for the C-X-C chemokine CXCL16. Used as a coreceptor by SIVs and by strains of HIV-2 and m-tropic HIV-1. In Pan troglodytes (Chimpanzee), this protein is C-X-C chemokine receptor type 6 (CXCR6).